Consider the following 494-residue polypeptide: Protein nucleotidyltransferase YdiU (494 aa).

ATP-binding residues include Gly-90, Gly-92, Arg-93, Lys-113, Asp-125, Gly-126, Arg-176, and Arg-183. Asp-252 functions as the Proton acceptor in the catalytic mechanism. 2 residues coordinate Mg(2+): Asn-253 and Asp-262. ATP is bound at residue Asp-262.

It belongs to the SELO family. It depends on Mg(2+) as a cofactor. The cofactor is Mn(2+).

The catalysed reaction is L-seryl-[protein] + ATP = 3-O-(5'-adenylyl)-L-seryl-[protein] + diphosphate. It carries out the reaction L-threonyl-[protein] + ATP = 3-O-(5'-adenylyl)-L-threonyl-[protein] + diphosphate. It catalyses the reaction L-tyrosyl-[protein] + ATP = O-(5'-adenylyl)-L-tyrosyl-[protein] + diphosphate. The enzyme catalyses L-histidyl-[protein] + UTP = N(tele)-(5'-uridylyl)-L-histidyl-[protein] + diphosphate. The catalysed reaction is L-seryl-[protein] + UTP = O-(5'-uridylyl)-L-seryl-[protein] + diphosphate. It carries out the reaction L-tyrosyl-[protein] + UTP = O-(5'-uridylyl)-L-tyrosyl-[protein] + diphosphate. Its function is as follows. Nucleotidyltransferase involved in the post-translational modification of proteins. It can catalyze the addition of adenosine monophosphate (AMP) or uridine monophosphate (UMP) to a protein, resulting in modifications known as AMPylation and UMPylation. The protein is Protein nucleotidyltransferase YdiU of Alkalilimnicola ehrlichii (strain ATCC BAA-1101 / DSM 17681 / MLHE-1).